Here is a 75-residue protein sequence, read N- to C-terminus: Porwaprin-d (75 aa).

An N-terminal signal peptide occupies residues 1–24; it reads MSSGGLLLLLGLLTLWAELTPVSS. Residues 27–72 form the WAP domain; sequence RPKKPGLCPPRPQKPPCVRECKNDWRCPGEQKCCRYGCIYECRDPI. 4 cysteine pairs are disulfide-bonded: cysteine 34–cysteine 60, cysteine 43–cysteine 64, cysteine 47–cysteine 59, and cysteine 53–cysteine 68.

The protein belongs to the venom waprin family. In terms of tissue distribution, expressed by the venom gland.

The protein localises to the secreted. Its function is as follows. Damages membranes of susceptible bacteria. Has no hemolytic activity. Not toxic to mice. Does not inhibit the proteinases elastase and cathepsin G. This Pseudechis porphyriacus (Red-bellied black snake) protein is Porwaprin-d.